Here is a 455-residue protein sequence, read N- to C-terminus: Rho GTPase-activating protein 3 (455 aa).

The segment covering 1-12 has biased composition (polar residues); it reads MTNFSRSKSTGT. The segment at 1–68 is disordered; it reads MTNFSRSKST…HASRSGNGSG (68 aa). The segment covering 24–33 has biased composition (basic and acidic residues); the sequence is GPDKYENIHN. The segment covering 43 to 54 has biased composition (low complexity); the sequence is STTSTDYYDAST. Residues 55-64 show a composition bias toward polar residues; that stretch reads PLSSHASRSG. The 14-residue stretch at 105–118 folds into the CRIB domain; the sequence is IGWPTEVKHVSHVT. Positions 153–331 constitute a Rho-GAP domain; it reads KSMQCSYDDR…LILMNLKERE (179 aa). 2 disordered regions span residues 342 to 366 and 432 to 455; these read KQTS…KPNN and FVSN…SLPW. The segment covering 435–446 has biased composition (basic and acidic residues); it reads NRDEGRKGREAW.

As to expression, expressed in differentiating xylem cells.

It is found in the cell membrane. Acts as a GTPase activator for the Rac-type GTPase by converting it to an inactive GDP-bound state. Involved in secondary wall pattern formation. In association with ROPGEF4, mediates local activation of ARAC10/ROP11 to initiate the distinct pattern of secondary cell walls in xylem cells. This is Rho GTPase-activating protein 3 (ROPGAP3) from Arabidopsis thaliana (Mouse-ear cress).